The chain runs to 207 residues: Holliday junction branch migration complex subunit RuvA (207 aa).

Residues 1 to 63 are domain I; the sequence is MISSLRGTVL…EDSLQLFGFS (63 aa). The domain II stretch occupies residues 64-142; the sequence is GLEQLQVFEL…ACRRPSAPSA (79 aa). The segment at 142 to 146 is flexible linker; sequence ARRPS. Residues 147–207 are domain III; sequence APSSVSDSVL…RLGPANQAAR (61 aa).

It belongs to the RuvA family. Homotetramer. Forms an RuvA(8)-RuvB(12)-Holliday junction (HJ) complex. HJ DNA is sandwiched between 2 RuvA tetramers; dsDNA enters through RuvA and exits via RuvB. An RuvB hexamer assembles on each DNA strand where it exits the tetramer. Each RuvB hexamer is contacted by two RuvA subunits (via domain III) on 2 adjacent RuvB subunits; this complex drives branch migration. In the full resolvosome a probable DNA-RuvA(4)-RuvB(12)-RuvC(2) complex forms which resolves the HJ.

The protein localises to the cytoplasm. Functionally, the RuvA-RuvB-RuvC complex processes Holliday junction (HJ) DNA during genetic recombination and DNA repair, while the RuvA-RuvB complex plays an important role in the rescue of blocked DNA replication forks via replication fork reversal (RFR). RuvA specifically binds to HJ cruciform DNA, conferring on it an open structure. The RuvB hexamer acts as an ATP-dependent pump, pulling dsDNA into and through the RuvAB complex. HJ branch migration allows RuvC to scan DNA until it finds its consensus sequence, where it cleaves and resolves the cruciform DNA. The chain is Holliday junction branch migration complex subunit RuvA from Leifsonia xyli subsp. xyli (strain CTCB07).